A 214-amino-acid chain; its full sequence is uncharacterized protein (214 aa).

The N-terminal stretch at 1–18 (MTMYIGLILVVLATFCQG) is a signal peptide. The N-linked (GlcNAc...) asparagine; by host glycan is linked to Asn64.

This is an uncharacterized protein from Magallana gigas (Pacific oyster).